Here is a 288-residue protein sequence, read N- to C-terminus: MFTRIALFLATNLAVLILASIVMSLLGVDSRSMSGLLVMAGIFGFGGSFISLLLSKWMAKRSTGAVVITEPRNQTERWLLATVERQAKAAGIGMPEVAVYEGPEINAFATGANRNNALVAVSTGLLHNMSEDEAEAVLGHEIAHVANGDMITMALLQGVLNTFVIVLARVVGGIIDSALSGNREGGGRGFAYFIIVFVLEMVFGLFATMISMWFSRHREFRADAGGASLAGRQKMIAALERLQLNHGQSTLPTQIAAFGIAGSTAKKLFMSHPPLEERIAALRASTVA.

The next 2 helical transmembrane spans lie at 5–25 (IALFLATNLAVLILASIVMSL) and 34–54 (SGLLVMAGIFGFGGSFISLLL). His-140 contributes to the Zn(2+) binding site. Glu-141 is a catalytic residue. Residue His-144 participates in Zn(2+) binding. 2 consecutive transmembrane segments (helical) span residues 155–175 (LLQGVLNTFVIVLARVVGGII) and 190–210 (FAYFIIVFVLEMVFGLFATMI). Residue Glu-219 participates in Zn(2+) binding.

It belongs to the peptidase M48B family. Zn(2+) is required as a cofactor.

The protein localises to the cell inner membrane. The sequence is that of Protease HtpX from Stenotrophomonas maltophilia (strain R551-3).